We begin with the raw amino-acid sequence, 313 residues long: Acetaldehyde dehydrogenase (313 aa).

Position 12–15 (12–15) interacts with NAD(+); the sequence is SGNI. C132 serves as the catalytic Acyl-thioester intermediate. NAD(+)-binding positions include 163 to 171 and N291; that span reads SAGPGTRAN.

It belongs to the acetaldehyde dehydrogenase family.

It catalyses the reaction acetaldehyde + NAD(+) + CoA = acetyl-CoA + NADH + H(+). This is Acetaldehyde dehydrogenase (bphG) from Burkholderia cepacia (Pseudomonas cepacia).